The primary structure comprises 601 residues: Peptide transporter PTR2 (601 aa).

Residues 1 to 10 (MLNHPSQGSD) show a composition bias toward polar residues. The disordered stretch occupies residues 1-66 (MLNHPSQGSD…DEDFEGPTEE (66 aa)). At 1-150 (MLNHPSQGSD…PVFGGYVADT (150 aa)) the chain is on the extracellular side. Residues 14–28 (DEKQGDFPVIEEEKT) show a composition bias toward basic and acidic residues. At tyrosine 37 the chain carries Phosphotyrosine. A phosphoserine mark is found at serine 39 and serine 45. The segment covering 42 to 53 (VANSTERYNLSP) has biased composition (polar residues). Positions 55-66 (PEDEDFEGPTEE) are enriched in acidic residues. Residues 151 to 172 (FWGKYNTICCGTAIYIAGIFIL) form a helical membrane-spanning segment. Residues 173-182 (FITSIPSVGN) are Cytoplasmic-facing. The helical transmembrane segment at 183–202 (RDSAIGGFIAAIILIGIATG) threads the bilayer. The Extracellular segment spans residues 203–210 (MIKANLSV). Residues 211-229 (LIADQLPKRKPSIKVLKSG) form a helical membrane-spanning segment. The Cytoplasmic portion of the chain corresponds to 230 to 267 (ERVIVDSNITLQNVFMFFYFMINVGSLSLMATTELEYH). A helical transmembrane segment spans residues 268–287 (KGFWAAYLLPFCFFWIAVVT). The Extracellular portion of the chain corresponds to 288-294 (LIFGKKQ). The chain crosses the membrane as a helical span at residues 295-316 (YIQRPIGDKVIAKSFKVCWILT). At 317 to 378 (KNKFDFNAAK…ISSFITQASM (62 aa)) the chain is on the cytoplasmic side. Residues 379–399 (MELHGIPNDFLQAFDSIALII) form a helical membrane-spanning segment. The Extracellular segment spans residues 400 to 412 (FIPIFEKFVYPFI). The helical transmembrane segment at 413-429 (RRYTPLKPITKIFFGFM) threads the bilayer. Residues 430–448 (FGSFAMTWAAVLQSFVYKA) are Cytoplasmic-facing. Residues 449–466 (GPWYNEPLGHNTPNHVHV) form a helical membrane-spanning segment. The Extracellular portion of the chain corresponds to 467-494 (CWQIPAYVLISFSEIFASITGLEYAYSK). The chain crosses the membrane as a helical span at residues 495–513 (APASMKSFIMSIFLLTNAF). Residues 514–526 (GSAIGCALSPVTV) lie on the Cytoplasmic side of the membrane. Residues 527-547 (DPKFTWLFTGLAVACFISGCL) traverse the membrane as a helical segment. At 548-554 (FWLCFRK) the chain is on the extracellular side. A helical membrane pass occupies residues 555–577 (YNDTEEEMNAMDYEEEDEFDLNP). At 578–601 (ISAPKANDIEILEPMESLRSTTKY) the chain is on the cytoplasmic side. Serine 594 carries the phosphoserine modification.

This sequence belongs to the major facilitator superfamily. Proton-dependent oligopeptide transporter (POT/PTR) (TC 2.A.17) family.

The protein localises to the membrane. Functionally, uptake of small peptides. The chain is Peptide transporter PTR2 (PTR2) from Saccharomyces cerevisiae (strain ATCC 204508 / S288c) (Baker's yeast).